Consider the following 780-residue polypeptide: ATP-dependent 6-phosphofructokinase, liver type (780 aa).

Alanine 2 is modified (N-acetylalanine). Residues 2–390 (AAVDLEKLRA…NWNIYKLLAH (389 aa)) form an N-terminal catalytic PFK domain 1 region. Residues glycine 25, 88–89 (RC), and 118–121 (GDGS) contribute to the ATP site. Aspartate 119 contacts Mg(2+). Substrate is bound by residues 164–166 (SID), arginine 201, 208–210 (MGR), glutamate 264, arginine 292, and 298–301 (HVQR). The Proton acceptor role is filled by aspartate 166. Position 377 is a phosphoserine (serine 377). The tract at residues 391-400 (QKPPKEKSNF) is interdomain linker. Positions 401–780 (SLAILNVGAP…RRTLSMDKGF (380 aa)) are C-terminal regulatory PFK domain 2. Residues arginine 470, 527-531 (TISNN), arginine 565, 572-574 (MGG), and glutamate 628 contribute to the beta-D-fructose 2,6-bisphosphate site. O-linked (GlcNAc) serine glycosylation occurs at serine 529. Tyrosine 640 carries the post-translational modification Phosphotyrosine. Beta-D-fructose 2,6-bisphosphate contacts are provided by residues arginine 654, 660 to 663 (HLQQ), and arginine 734. Serine 775 carries the phosphoserine modification.

The protein belongs to the phosphofructokinase type A (PFKA) family. ATP-dependent PFK group I subfamily. Eukaryotic two domain clade 'E' sub-subfamily. As to quaternary structure, homo- and heterotetramers. Phosphofructokinase (PFK) enzyme functions as a tetramer composed of different combinations of 3 types of subunits, called PFKM (M), PFKL (L) and PFKP (P). The composition of the PFK tetramer differs according to the tissue type it is present in. The kinetic and regulatory properties of the tetrameric enzyme are dependent on the subunit composition, hence can vary across tissues. Mg(2+) serves as cofactor. GlcNAcylation at Ser-529 by OGT decreases enzyme activity, leading to redirect glucose flux through the oxidative pentose phosphate pathway. Glycosylation is stimulated by both hypoxia and glucose deprivation.

It localises to the cytoplasm. The catalysed reaction is beta-D-fructose 6-phosphate + ATP = beta-D-fructose 1,6-bisphosphate + ADP + H(+). It functions in the pathway carbohydrate degradation; glycolysis; D-glyceraldehyde 3-phosphate and glycerone phosphate from D-glucose: step 3/4. Allosterically activated by ADP, AMP, or fructose 2,6-bisphosphate, and allosterically inhibited by ATP or citrate. GlcNAcylation by OGT overcomes allosteric regulation. Its function is as follows. Catalyzes the phosphorylation of D-fructose 6-phosphate to fructose 1,6-bisphosphate by ATP, the first committing step of glycolysis. Negatively regulates the phagocyte oxidative burst in response to bacterial infection by controlling cellular NADPH biosynthesis and NADPH oxidase-derived reactive oxygen species. Upon macrophage activation, drives the metabolic switch toward glycolysis, thus preventing glucose turnover that produces NADPH via pentose phosphate pathway. The protein is ATP-dependent 6-phosphofructokinase, liver type (PFKL) of Pongo abelii (Sumatran orangutan).